Reading from the N-terminus, the 1861-residue chain is Amylopullulanase (1861 aa).

The signal sequence occupies residues 1–35 (MNKKLFTNRFISFNMSLLLVLTAVFSSIPLHSVHA). Ca(2+)-binding residues include D248, N250, D288, D343, N401, D403, N406, D407, and D453. Residues H526 and R626 each contribute to the substrate site. D628 acts as the Nucleophile in catalysis. Residue E657 is the Proton donor of the active site. Substrate contacts are provided by residues 733–734 (HD), D793, and R797. 2 consecutive Fibronectin type-III domains span residues 929–1021 (APQA…AYPI) and 1158–1252 (KPTA…VVPI). The region spanning 1246–1354 (KPDVVPIKVI…INDTVYRWRD (109 aa)) is the CBM20 domain. Residues 1448–1486 (QENNSGSGTGNNNTSTSGSNSSSTGSGSTGSTSITSNIS) are disordered. Residues 1450–1486 (NNSGSGTGNNNTSTSGSNSSSTGSGSTGSTSITSNIS) are compositionally biased toward low complexity. SLH domains lie at 1677–1740 (EYDK…YSGE), 1741–1799 (FSDV…KEEN), and 1802–1861 (ATTF…SGNI).

This sequence belongs to the glycosyl hydrolase 13 family. The cofactor is Ca(2+). In terms of processing, glycosylated.

It is found in the secreted. The protein resides in the cell wall. It carries out the reaction Endohydrolysis of (1-&gt;4)-alpha-D-glucosidic linkages in polysaccharides containing three or more (1-&gt;4)-alpha-linked D-glucose units.. The catalysed reaction is Hydrolysis of (1-&gt;6)-alpha-D-glucosidic linkages in pullulan, amylopectin and glycogen, and in the alpha- and beta-limit dextrins of amylopectin and glycogen.. The sequence is that of Amylopullulanase (amyB) from Thermoanaerobacterium thermosulfurigenes (Clostridium thermosulfurogenes).